We begin with the raw amino-acid sequence, 484 residues long: Adenylyltransferase and sulfurtransferase uba4 (484 aa).

Residues 39-49 (AKAQSAAATTA) show a composition bias toward low complexity. A disordered region spans residues 39–58 (AKAQSAAATTAGDNHDKPRR). Residues Gly98, Asp119, 126-130 (SNLHR), Lys143, and 187-188 (DN) contribute to the ATP site. Positions 236 and 239 each coordinate Zn(2+). The active-site Glycyl thioester intermediate; for adenylyltransferase activity is Cys253. Zn(2+) contacts are provided by Cys313 and Cys316. In terms of domain architecture, Rhodanese spans 370–482 (PEKTPTLIDV…WREQVDPEWP (113 aa)). Cys437 (cysteine persulfide intermediate; for sulfurtransferase activity) is an active-site residue.

In the N-terminal section; belongs to the HesA/MoeB/ThiF family. UBA4 subfamily. The cofactor is Zn(2+).

It localises to the cytoplasm. The protein resides in the cytosol. The catalysed reaction is [molybdopterin-synthase sulfur-carrier protein]-C-terminal Gly-Gly + ATP + H(+) = [molybdopterin-synthase sulfur-carrier protein]-C-terminal Gly-Gly-AMP + diphosphate. It catalyses the reaction [molybdopterin-synthase sulfur-carrier protein]-C-terminal Gly-Gly-AMP + S-sulfanyl-L-cysteinyl-[cysteine desulfurase] + AH2 = [molybdopterin-synthase sulfur-carrier protein]-C-terminal-Gly-aminoethanethioate + L-cysteinyl-[cysteine desulfurase] + A + AMP + 2 H(+). Its pathway is tRNA modification; 5-methoxycarbonylmethyl-2-thiouridine-tRNA biosynthesis. It participates in cofactor biosynthesis; molybdopterin biosynthesis. Plays a central role in 2-thiolation of mcm(5)S(2)U at tRNA wobble positions of cytosolic tRNA(Lys), tRNA(Glu) and tRNA(Gln). Also essential during biosynthesis of the molybdenum cofactor. Acts by mediating the C-terminal thiocarboxylation of sulfur carriers urm1 and mocs2a. Its N-terminus first activates urm1 and mocs2a as acyl-adenylates (-COAMP), then the persulfide sulfur on the catalytic cysteine is transferred to urm1 and mocs2a to form thiocarboxylation (-COSH) of their C-terminus. The reaction probably involves hydrogen sulfide that is generated from the persulfide intermediate and that acts as a nucleophile towards urm1 and mocs2a. Subsequently, a transient disulfide bond is formed. Does not use thiosulfate as sulfur donor; nfs1 probably acting as a sulfur donor for thiocarboxylation reactions. The sequence is that of Adenylyltransferase and sulfurtransferase uba4 from Aspergillus terreus (strain NIH 2624 / FGSC A1156).